Here is a 288-residue protein sequence, read N- to C-terminus: ATP synthase gamma chain (288 aa).

The protein belongs to the ATPase gamma chain family. As to quaternary structure, F-type ATPases have 2 components, CF(1) - the catalytic core - and CF(0) - the membrane proton channel. CF(1) has five subunits: alpha(3), beta(3), gamma(1), delta(1), epsilon(1). CF(0) has three main subunits: a, b and c.

Its subcellular location is the cell inner membrane. In terms of biological role, produces ATP from ADP in the presence of a proton gradient across the membrane. The gamma chain is believed to be important in regulating ATPase activity and the flow of protons through the CF(0) complex. This is ATP synthase gamma chain from Actinobacillus pleuropneumoniae serotype 3 (strain JL03).